The sequence spans 313 residues: Formimidoylglutamase (313 aa).

Positions 130, 155, 157, 159, 241, and 243 each coordinate Mn(2+).

It belongs to the arginase family. Mn(2+) is required as a cofactor.

The enzyme catalyses N-formimidoyl-L-glutamate + H2O = formamide + L-glutamate. It functions in the pathway amino-acid degradation; L-histidine degradation into L-glutamate; L-glutamate from N-formimidoyl-L-glutamate (hydrolase route): step 1/1. Functionally, catalyzes the conversion of N-formimidoyl-L-glutamate to L-glutamate and formamide. The chain is Formimidoylglutamase from Salmonella enteritidis PT4 (strain P125109).